Here is a 344-residue protein sequence, read N- to C-terminus: Putative replication factor C small subunit L499 (344 aa).

57–64 provides a ligand contact to ATP; sequence GPSGSGKT.

It belongs to the activator 1 small subunits family. RfcS subfamily.

Part of the RFC clamp loader complex which loads the PCNA sliding clamp onto DNA. This Acanthamoeba polyphaga mimivirus (APMV) protein is Putative replication factor C small subunit L499.